Here is a 261-residue protein sequence, read N- to C-terminus: HLA class II histocompatibility antigen, DM alpha chain (261 aa).

Positions 1–26 (MGHEQNQGAALLQMLPLLWLLPHSWA) are cleaved as a signal peptide. The segment at 27–124 (VPEAPTPMWP…KLDGKIPVSR (98 aa)) is alpha-1. The Lumenal segment spans residues 27–233 (VPEAPTPMWP…PSDLLENVLC (207 aa)). N41 carries an N-linked (GlcNAc...) asparagine glycan. 2 disulfides stabilise this stretch: C50/C105 and C147/C202. Positions 121-215 (PVSRGFPIAE…HEIDRYTAIA (95 aa)) constitute an Ig-like C1-type domain. The tract at residues 125 to 217 (GFPIAEVFTL…IDRYTAIAYW (93 aa)) is alpha-2. The connecting peptide stretch occupies residues 218–233 (VPRNALPSDLLENVLC). Residues 234-254 (GVAFGLGVLGIIVGIVLIIYF) traverse the membrane as a helical segment. Over 255-261 (RKPCSGD) the chain is Cytoplasmic.

Belongs to the MHC class II family. In terms of assembly, heterodimer of an alpha chain (DMA) and a beta chain (DMB). Interacts with MHCII; this interaction mediates rapid selection of high-affinity peptides in a pH-dependent manner, with an optimum at pH 5.5.

The protein resides in the late endosome membrane. It is found in the lysosome membrane. Plays a critical role in catalyzing the release of class II-associated invariant chain peptide (CLIP) from newly synthesized MHC class II molecules and freeing the peptide binding site for acquisition of antigenic peptides. In B-cells, the interaction between HLA-DM and MHC class II molecules is regulated by HLA-DO. This Homo sapiens (Human) protein is HLA class II histocompatibility antigen, DM alpha chain (HLA-DMA).